The sequence spans 636 residues: Outer spore wall assembly protein SHE10 (636 aa).

The first 23 residues, Met1–Tyr23, serve as a signal peptide directing secretion. 2 coiled-coil regions span residues Arg433–Glu460 and Lys551–Glu584. Residues Gln565–Ser607 form a disordered region. Positions Ala579–Ser607 are enriched in low complexity.

This sequence belongs to the SHE10 family. In terms of assembly, component of the mitochondria-localized RNase mitochondrial RNA-processing (RNase MRP) composed of one single RNA encoded by the NME1 gene and at least 31 proteins. Absent in the nucleus-localized RNase MRP (NuMRP).

The protein resides in the mitochondrion. Its function is as follows. Involved in spore wall assembly. May be a component of the mitochondrial RNase MRP (MtMRP), a ribonucleoprotein endoribonuclease involved in the cleaving RNA transcripts to generate primers for DNA replication in mitochondria. This is Outer spore wall assembly protein SHE10 from Kluyveromyces lactis (strain ATCC 8585 / CBS 2359 / DSM 70799 / NBRC 1267 / NRRL Y-1140 / WM37) (Yeast).